The following is a 279-amino-acid chain: F420-dependent methylenetetrahydromethanopterin dehydrogenase (279 aa).

It belongs to the MTD family.

The enzyme catalyses 5,10-methylenetetrahydromethanopterin + oxidized coenzyme F420-(gamma-L-Glu)(n) + 2 H(+) = 5,10-methenyl-5,6,7,8-tetrahydromethanopterin + reduced coenzyme F420-(gamma-L-Glu)(n). The protein operates within one-carbon metabolism; methanogenesis from CO(2); 5,10-methylene-5,6,7,8-tetrahydromethanopterin from 5,10-methenyl-5,6,7,8-tetrahydromethanopterin (coenzyme F420 route): step 1/1. In terms of biological role, catalyzes the reversible reduction of methenyl-H(4)MPT(+) to methylene-H(4)MPT. This chain is F420-dependent methylenetetrahydromethanopterin dehydrogenase (mtd), found in Methanosarcina acetivorans (strain ATCC 35395 / DSM 2834 / JCM 12185 / C2A).